We begin with the raw amino-acid sequence, 1933 residues long: WD repeat-containing protein 81 (1933 aa).

The interval 1–643 (MAQGSRRRKV…TPCESGWTRE (643 aa)) is necessary and sufficient for the interaction with SQSTM1. Disordered regions lie at residues 305–334 (PSED…RPGC), 663–714 (SIPG…GKIV), 1038–1057 (CAFG…SGLG), 1090–1209 (QPQE…EGKE), 1517–1544 (SLRN…SCLQ), and 1565–1590 (DSQP…SRNE). The span at 314–330 (SEEKDRTGVKSEKDGEG) shows a compositional bias: basic and acidic residues. The region spanning 333-610 (GCPTCQKELR…IPRLLVQPIQ (278 aa)) is the BEACH domain. Over residues 668–693 (AGDQPGSSSSQASPGLLPFSAPSGSR) the composition is skewed to low complexity. 2 stretches are compositionally biased toward polar residues: residues 1100-1112 (GQLS…SEAS) and 1131-1140 (VKSGDSSQDL). Residues 1145-1166 (GSEEEEEEEEGCVVLEEEEQDE) show a composition bias toward acidic residues. WD repeat units lie at residues 1638–1677 (GHTG…DGTS), 1684–1724 (IYAQ…TLRT), 1776–1815 (LNPG…VLRG), 1818–1856 (AHEG…PTHH), and 1903–1933 (NFRG…RLLA).

It belongs to the WD repeat WDR81 family. Interacts with WDR91; involved in early to late endosome cargo transport. Interacts with BECN1; negatively regulates the PI3 kinase/PI3K activity associated with endosomal membranes. Interacts with SQSTM1; the interaction is direct and regulates the interaction of SQSTM1 with ubiquitinated proteins. Interacts with MAP1LC3C; recruits MAP1LC3C to ubiquitinated protein aggregates in the aggrephagy process.

The protein resides in the early endosome membrane. It localises to the late endosome membrane. The protein localises to the lysosome membrane. It is found in the cytoplasmic vesicle. Its subcellular location is the autophagosome membrane. The protein resides in the mitochondrion. It localises to the cytoplasm. The protein localises to the cytosol. Its function is as follows. Functions as a negative regulator of the PI3 kinase/PI3K activity associated with endosomal membranes via BECN1, a core subunit of the PI3K complex. By modifying the phosphatidylinositol 3-phosphate/PtdInsP3 content of endosomal membranes may regulate endosome fusion, recycling, sorting and early to late endosome transport. It is for instance, required for the delivery of cargos like BST2/tetherin from early to late endosome and thereby participates indirectly to their degradation by the lysosome. May also play a role in aggrephagy, the macroautophagic degradation of ubiquitinated protein aggregates. In this process, may regulate the interaction of SQSTM1 with ubiquitinated proteins and also recruit MAP1LC3C. May also be involved in maintenance of normal mitochondrial structure and organization. This is WD repeat-containing protein 81 from Rattus norvegicus (Rat).